Reading from the N-terminus, the 386-residue chain is MNEPTENRLGCSRTPEPDIRLRKGHQLDGTRRGDNDSHQGDLEPILEASVLSSHHKKSSEEHEYSDEAPQEDEGFMGMSPLLQAHHAMEKMEEFVCKVWEGRWRVIPHDVLPDWLKDNDFLLHGHRPPMPSFRACFKSIFRIHTETGNIWTHLLGCVFFLCLGIFYMFRPNISFVAPLQEKVVFGLFFLGAILCLSFSWLFHTVYCHSEGVSRLFSKLDYSGIALLIMGSFVPWLYYSFYCNPQPCFIYLIVICVLGIAAIIVSQWDMFATPQYRGVRAGVFLGLGLSGIIPTLHYVISEGFLKAATIGQIGWLMLMASLYITGAALYAARIPERFFPGKCDIWFHSHQLFHIFVVAGAFVHFHGVSNLQEFRFMIGGGCSEEDAL.

Positions 1–71 are disordered; that stretch reads MNEPTENRLG…HEYSDEAPQE (71 aa). The Cytoplasmic segment spans residues 1 to 147; that stretch reads MNEPTENRLG…SIFRIHTETG (147 aa). Residues 15–41 show a composition bias toward basic and acidic residues; the sequence is PEPDIRLRKGHQLDGTRRGDNDSHQGD. A helical transmembrane segment spans residues 148-168; the sequence is NIWTHLLGCVFFLCLGIFYMF. Residues 169 to 181 are Extracellular-facing; that stretch reads RPNISFVAPLQEK. Residues 182 to 202 form a helical membrane-spanning segment; it reads VVFGLFFLGAILCLSFSWLFH. Residue H202 coordinates Zn(2+). At 203-213 the chain is on the cytoplasmic side; that stretch reads TVYCHSEGVSR. The chain crosses the membrane as a helical span at residues 214–234; that stretch reads LFSKLDYSGIALLIMGSFVPW. The Extracellular segment spans residues 235–245; sequence LYYSFYCNPQP. Residues 246 to 266 form a helical membrane-spanning segment; it reads CFIYLIVICVLGIAAIIVSQW. Over 267–273 the chain is Cytoplasmic; it reads DMFATPQ. Residues 274–294 form a helical membrane-spanning segment; it reads YRGVRAGVFLGLGLSGIIPTL. Residues 295–309 are Extracellular-facing; that stretch reads HYVISEGFLKAATIG. A helical transmembrane segment spans residues 310–330; it reads QIGWLMLMASLYITGAALYAA. Over 331–348 the chain is Cytoplasmic; sequence RIPERFFPGKCDIWFHSH. Positions 348 and 352 each coordinate Zn(2+). A helical membrane pass occupies residues 349–369; it reads QLFHIFVVAGAFVHFHGVSNL. The Extracellular portion of the chain corresponds to 370–386; it reads QEFRFMIGGGCSEEDAL.

Belongs to the ADIPOR family. In terms of assembly, may form homooligomers and heterooligomers with ADIPOR1. Interacts with APPL2 (via BAR domain); ADIPOQ dissociates this interaction. In terms of tissue distribution, ubiquitous. Highly expressed in skeletal muscle, liver and placenta. Weakly expressed in brain, heart, colon, spleen, kidney, thymus, small intestine, peripheral blood leukocytes and lung.

The protein localises to the cell membrane. Receptor for ADIPOQ, an essential hormone secreted by adipocytes that regulates glucose and lipid metabolism. Required for normal body fat and glucose homeostasis. ADIPOQ-binding activates a signaling cascade that leads to increased PPARA activity, and ultimately to increased fatty acid oxidation and glucose uptake. Has intermediate affinity for globular and full-length adiponectin. Required for normal revascularization after chronic ischemia caused by severing of blood vessels. The chain is Adiponectin receptor protein 2 from Homo sapiens (Human).